A 431-amino-acid polypeptide reads, in one-letter code: Enolase (431 aa).

Gln-167 provides a ligand contact to (2R)-2-phosphoglycerate. The active-site Proton donor is Glu-209. 3 residues coordinate Mg(2+): Asp-246, Glu-289, and Asp-316. Residues Lys-341, Arg-370, Ser-371, and Lys-392 each contribute to the (2R)-2-phosphoglycerate site. The active-site Proton acceptor is the Lys-341.

This sequence belongs to the enolase family. Component of the RNA degradosome, a multiprotein complex involved in RNA processing and mRNA degradation. Mg(2+) is required as a cofactor.

Its subcellular location is the cytoplasm. It is found in the secreted. The protein localises to the cell surface. The catalysed reaction is (2R)-2-phosphoglycerate = phosphoenolpyruvate + H2O. Its pathway is carbohydrate degradation; glycolysis; pyruvate from D-glyceraldehyde 3-phosphate: step 4/5. In terms of biological role, catalyzes the reversible conversion of 2-phosphoglycerate (2-PG) into phosphoenolpyruvate (PEP). It is essential for the degradation of carbohydrates via glycolysis. The chain is Enolase from Shewanella denitrificans (strain OS217 / ATCC BAA-1090 / DSM 15013).